The primary structure comprises 444 residues: Aflatoxin biosynthesis regulatory protein (444 aa).

The disordered stretch occupies residues 1–26 (MVDHISPRASPGPIRSSQTRRARKLR). The segment at residues 29-56 (CTSCASSKVRCTKEKPACARCIERGLAC) is a DNA-binding region (zn(2)-C6 fungal-type). The interval 64 to 167 (MGRNPRAPSP…QGLGGDLAGQ (104 aa)) is disordered. The span at 106 to 116 (TQAHTHAHSHP) shows a compositional bias: basic residues. Residues 120–130 (PQSHPQSNQPP) are compositionally biased toward low complexity. Residues 136–149 (PNGSSSVSAIFSHQ) show a composition bias toward polar residues.

In terms of assembly, interacts with its co-regulator aflS.

It localises to the nucleus. It is found in the endosome. In terms of biological role, transcription factor involved in regulation of the aflatoxin biosynthesis gene cluster. Binds with its co-regulator aflS to AFLR1 elements (5'-TCGSWNNSCGR-3') present in the promoters of the aflatoxin cluster genes. The ratio of the expression data between aflS:aflR plays a crucial role in the regulation of aflatoxins production. A high ratio, produced at a range between 17 and 30 degrees Celsius, corresponds with the production profile of aflatoxin G1 biosynthesis. A low ratio, produced over 30 degrees Celsius, is related to aflatoxin B1 biosynthesis. In Aspergillus parasiticus (strain ATCC 56775 / NRRL 5862 / SRRC 143 / SU-1), this protein is Aflatoxin biosynthesis regulatory protein.